The primary structure comprises 193 residues: Nucleoside triphosphate pyrophosphatase (193 aa).

Catalysis depends on Asp69, which acts as the Proton acceptor.

It belongs to the Maf family. Requires a divalent metal cation as cofactor.

The protein resides in the cytoplasm. It carries out the reaction a ribonucleoside 5'-triphosphate + H2O = a ribonucleoside 5'-phosphate + diphosphate + H(+). The catalysed reaction is a 2'-deoxyribonucleoside 5'-triphosphate + H2O = a 2'-deoxyribonucleoside 5'-phosphate + diphosphate + H(+). In terms of biological role, nucleoside triphosphate pyrophosphatase. May have a dual role in cell division arrest and in preventing the incorporation of modified nucleotides into cellular nucleic acids. This chain is Nucleoside triphosphate pyrophosphatase, found in Parasynechococcus marenigrum (strain WH8102).